A 302-amino-acid polypeptide reads, in one-letter code: ATP synthase gamma chain (302 aa).

Belongs to the ATPase gamma chain family. F-type ATPases have 2 components, CF(1) - the catalytic core - and CF(0) - the membrane proton channel. CF(1) has five subunits: alpha(3), beta(3), gamma(1), delta(1), epsilon(1). CF(0) has three main subunits: a, b and c.

The protein localises to the cell inner membrane. Functionally, produces ATP from ADP in the presence of a proton gradient across the membrane. The gamma chain is believed to be important in regulating ATPase activity and the flow of protons through the CF(0) complex. The chain is ATP synthase gamma chain from Bartonella bacilliformis (strain ATCC 35685 / KC583 / Herrer 020/F12,63).